The sequence spans 309 residues: D-alanine--D-alanine ligase (309 aa).

Positions 110–305 (KLCWTGAGLP…FQELVWHILE (196 aa)) constitute an ATP-grasp domain. 136 to 191 (RQALGFPVIVKPAEEGSSIGMSRAATAEELAQAWERASGYGCAVFAERWIDGVEYT) is an ATP binding site. 3 residues coordinate Mg(2+): Asp-259, Glu-272, and Asn-274.

This sequence belongs to the D-alanine--D-alanine ligase family. It depends on Mg(2+) as a cofactor. Mn(2+) serves as cofactor.

Its subcellular location is the cytoplasm. It carries out the reaction 2 D-alanine + ATP = D-alanyl-D-alanine + ADP + phosphate + H(+). The protein operates within cell wall biogenesis; peptidoglycan biosynthesis. Cell wall formation. In Methylococcus capsulatus (strain ATCC 33009 / NCIMB 11132 / Bath), this protein is D-alanine--D-alanine ligase.